Here is a 131-residue protein sequence, read N- to C-terminus: Peptidyl-prolyl cis-trans isomerase NIMA-interacting 4 (131 aa).

The tract at residues 1-25 is necessary for nuclear localization and DNA-binding; sequence MPPKGKSGSGKGGKGKAASGSESSE. The interval 1–37 is disordered; it reads MPPKGKSGSGKGGKGKAASGSESSEKKAQGPKGGGNA. The segment at 1–41 is necessary for association with the pre-rRNP complexes; the sequence is MPPKGKSGSGKGGKGKAASGSESSEKKAQGPKGGGNAVKVR. Position 19 is a phosphoserine; by CK2 (Ser-19). The region spanning 35–129 is the PpiC domain; the sequence is GNAVKVRHIL…FGYHIIMVEG (95 aa).

It belongs to the PpiC/parvulin rotamase family. PIN4 subfamily. Found in pre-ribosomal ribonucleoprotein (pre-rRNP) complexes. Post-translationally, phosphorylated. Phosphorylation occurs both in the nucleus and the cytoplasm. Phosphorylation at Ser-19 does not affect its PPIase activity but is required for nuclear localization, and the dephosphorylation is a prerequisite for the binding to DNA. The unphosphorylated form associates with the pre-rRNP complexes in the nucleus.

It localises to the nucleus. The protein resides in the nucleolus. The protein localises to the cytoplasm. Its subcellular location is the cytoskeleton. It is found in the spindle. The catalysed reaction is [protein]-peptidylproline (omega=180) = [protein]-peptidylproline (omega=0). Functionally, involved as a ribosomal RNA processing factor in ribosome biogenesis. Binds to tightly bent AT-rich stretches of double-stranded DNA. This Bos taurus (Bovine) protein is Peptidyl-prolyl cis-trans isomerase NIMA-interacting 4 (PIN4).